The sequence spans 527 residues: Serine/threonine-protein kinase NLK (527 aa).

Sufficient for interaction with DAPK3 regions lie at residues 1 to 125 (MSLC…KAHH) and 124 to 416 (HHHQ…SKRI). 2 required for interaction with TAB2 regions span residues 1–304 (MSLC…VVTQ) and 434–527 (YHTC…LVWE). Disordered regions lie at residues 22-72 (AAAA…SSAA) and 90-140 (QQPY…DIEP). Positions 26 to 54 (GHHHHHHHHLPHLPPPHLHHHHHPQHHLH) are enriched in basic residues. A compositionally biased stretch (low complexity) spans 103–119 (PGPAAAAPAQVQAAAAA). Basic residues predominate over residues 122–131 (KAHHHQHSHH). The region spanning 138–427 (IEPDRPIGYG…AKDALAHPYL (290 aa)) is the Protein kinase domain. ATP contacts are provided by residues 144–152 (IGYGAFGVV) and Lys-167. The Proton acceptor role is filled by Asp-264. Phosphothreonine; by autocatalysis is present on Thr-298. The short motif at 298–300 (TQE) is the TQE element. Residues 428-527 (DEGRLRYHTC…EMPPSPLVWE (100 aa)) form a required for homodimerization and kinase activation and localization to the nucleus region. Phosphoserine is present on Ser-522.

Belongs to the protein kinase superfamily. CMGC Ser/Thr protein kinase family. MAP kinase subfamily. As to quaternary structure, homodimer. Homodimerization is required for intermolecular autophosphorylation, kinase activation and nuclear localization. May interact with components of cullin-RING-based SCF (SKP1-CUL1-F-box protein) E3 ubiquitin-protein ligase complexes. Interacts with LEF1, MEF2A, MYBL1 and MYBL2. Interacts with the upstream activating kinases HIPK2 and MAP3K7/TAK1. Interaction with MAP3K7/TAK1 seems to be indirect, and may be mediated by other proteins such as STAT3, TAB1 and TAB2. Interacts with and phosphorylates a number of transcription factors including FOXO1, FOXO3, FOXO4, MYB, NOTCH1 and TCF7L2/TCF4. Interacts with DAPK3/ZIPK, and this interaction may disrupt interaction with transcription factors such as TCF7L2/TCF4. Interacts with RNF138/NARF. Interacts with ATF5; the interaction stabilizes ATF5 at the protein level in a kinase-independent manner. It depends on Mg(2+) as a cofactor. Post-translationally, phosphorylated on Thr-298. Intermolecular autophosphorylation on Thr-298 activates the enzyme.

Its subcellular location is the nucleus. The protein resides in the cytoplasm. It catalyses the reaction L-seryl-[protein] + ATP = O-phospho-L-seryl-[protein] + ADP + H(+). The catalysed reaction is L-threonyl-[protein] + ATP = O-phospho-L-threonyl-[protein] + ADP + H(+). Activated by dimerization and subsequent intermolecular autophosphorylation on Thr-298. Activated by the non-canonical Wnt signaling pathway, in which WNT5A treatment leads to activation of MAP3K7/TAK1 and HIPK2, which subsequently phosphorylates and activates this protein. Other cytokines such as IL6 may also activate this regulatory circuit. Its function is as follows. Serine/threonine-protein kinase that regulates a number of transcription factors with key roles in cell fate determination. Positive effector of the non-canonical Wnt signaling pathway, acting downstream of WNT5A, MAP3K7/TAK1 and HIPK2. Negative regulator of the canonical Wnt/beta-catenin signaling pathway. Binds to and phosphorylates TCF7L2/TCF4 and LEF1, promoting the dissociation of the TCF7L2/LEF1/beta-catenin complex from DNA, as well as the ubiquitination and subsequent proteolysis of LEF1. Together these effects inhibit the transcriptional activation of canonical Wnt/beta-catenin target genes. Negative regulator of the Notch signaling pathway. Binds to and phosphorylates NOTCH1, thereby preventing the formation of a transcriptionally active ternary complex of NOTCH1, RBPJ/RBPSUH and MAML1. Negative regulator of the MYB family of transcription factors. Phosphorylation of MYB leads to its subsequent proteolysis while phosphorylation of MYBL1 and MYBL2 inhibits their interaction with the coactivator CREBBP. Other transcription factors may also be inhibited by direct phosphorylation of CREBBP itself. Acts downstream of IL6 and MAP3K7/TAK1 to phosphorylate STAT3, which is in turn required for activation of NLK by MAP3K7/TAK1. Upon IL1B stimulus, cooperates with ATF5 to activate the transactivation activity of C/EBP subfamily members. Phosphorylates ATF5 but also stabilizes ATF5 protein levels in a kinase-independent manner. Acts as an inhibitor of the mTORC1 complex in response to osmotic stress by mediating phosphorylation of RPTOR, thereby preventing recruitment of the mTORC1 complex to lysosomes. The sequence is that of Serine/threonine-protein kinase NLK (NLK) from Homo sapiens (Human).